We begin with the raw amino-acid sequence, 393 residues long: 4-hydroxyphenylpyruvate dioxygenase (393 aa).

VOC domains follow at residues 17 to 148 (AFDH…LLER) and 179 to 339 (FLDH…IFSK). 3 residues coordinate Fe cation: His182, His267, and Glu350.

Belongs to the 4HPPD family. Fe cation serves as cofactor. In terms of tissue distribution, expressed in the hypodermis and intestine.

The catalysed reaction is 3-(4-hydroxyphenyl)pyruvate + O2 = homogentisate + CO2. Its pathway is amino-acid degradation; L-phenylalanine degradation; acetoacetate and fumarate from L-phenylalanine: step 3/6. Its function is as follows. Key enzyme in the degradation of tyrosine. The polypeptide is 4-hydroxyphenylpyruvate dioxygenase (Caenorhabditis elegans).